We begin with the raw amino-acid sequence, 443 residues long: ATP-dependent protease ATPase subunit HslU (443 aa).

Residues Ile-19 and 61 to 66 contribute to the ATP site; that span reads GVGKTE. A disordered region spans residues 139 to 158; the sequence is PPRDIGFSQPEEKDSNTRQV. ATP is bound by residues Asp-256, Glu-321, and Arg-393.

Belongs to the ClpX chaperone family. HslU subfamily. In terms of assembly, a double ring-shaped homohexamer of HslV is capped on each side by a ring-shaped HslU homohexamer. The assembly of the HslU/HslV complex is dependent on binding of ATP.

The protein resides in the cytoplasm. In terms of biological role, ATPase subunit of a proteasome-like degradation complex; this subunit has chaperone activity. The binding of ATP and its subsequent hydrolysis by HslU are essential for unfolding of protein substrates subsequently hydrolyzed by HslV. HslU recognizes the N-terminal part of its protein substrates and unfolds these before they are guided to HslV for hydrolysis. In Cupriavidus taiwanensis (strain DSM 17343 / BCRC 17206 / CCUG 44338 / CIP 107171 / LMG 19424 / R1) (Ralstonia taiwanensis (strain LMG 19424)), this protein is ATP-dependent protease ATPase subunit HslU.